The following is a 200-amino-acid chain: Protein GrpE (200 aa).

The protein belongs to the GrpE family. As to quaternary structure, homodimer.

The protein resides in the cytoplasm. Participates actively in the response to hyperosmotic and heat shock by preventing the aggregation of stress-denatured proteins, in association with DnaK and GrpE. It is the nucleotide exchange factor for DnaK and may function as a thermosensor. Unfolded proteins bind initially to DnaJ; upon interaction with the DnaJ-bound protein, DnaK hydrolyzes its bound ATP, resulting in the formation of a stable complex. GrpE releases ADP from DnaK; ATP binding to DnaK triggers the release of the substrate protein, thus completing the reaction cycle. Several rounds of ATP-dependent interactions between DnaJ, DnaK and GrpE are required for fully efficient folding. The sequence is that of Protein GrpE from Mycoplasma mycoides subsp. mycoides SC (strain CCUG 32753 / NCTC 10114 / PG1).